Reading from the N-terminus, the 326-residue chain is tRNA-modifying protein YgfZ (326 aa).

The folate site is built by Trp27 and Trp189.

It belongs to the tRNA-modifying YgfZ family.

It is found in the cytoplasm. Functionally, folate-binding protein involved in regulating the level of ATP-DnaA and in the modification of some tRNAs. It is probably a key factor in regulatory networks that act via tRNA modification, such as initiation of chromosomal replication. The polypeptide is tRNA-modifying protein YgfZ (Escherichia coli O157:H7 (strain EC4115 / EHEC)).